Here is a 601-residue protein sequence, read N- to C-terminus: Methionine--tRNA ligase (601 aa).

A 'HIGH' region motif is present at residues 21–31 (PYANGPRHIGH). Zn(2+) contacts are provided by cysteine 153, cysteine 156, cysteine 166, and cysteine 169. Residue asparagine 361 participates in ATP binding.

The protein belongs to the class-I aminoacyl-tRNA synthetase family. MetG type 1 subfamily. In terms of assembly, monomer. It depends on Zn(2+) as a cofactor.

It localises to the cytoplasm. It carries out the reaction tRNA(Met) + L-methionine + ATP = L-methionyl-tRNA(Met) + AMP + diphosphate. Is required not only for elongation of protein synthesis but also for the initiation of all mRNA translation through initiator tRNA(fMet) aminoacylation. This Cutibacterium acnes (strain DSM 16379 / KPA171202) (Propionibacterium acnes) protein is Methionine--tRNA ligase.